The primary structure comprises 36 residues: uncharacterized protein (36 aa).

This is an uncharacterized protein from Enterobacteria phage T4 (Bacteriophage T4).